We begin with the raw amino-acid sequence, 488 residues long: 2,3-bisphosphoglycerate-independent phosphoglycerate mutase (488 aa).

Serine 10 acts as the Phosphoserine intermediate in catalysis. Serine 10 contributes to the Mn(2+) binding site. Substrate is bound by residues histidine 69, arginine 99–aspartate 100, arginine 135, arginine 142, arginine 215–arginine 218, and lysine 290. The Mn(2+) site is built by aspartate 359, histidine 363, aspartate 400, histidine 401, and histidine 430.

The protein belongs to the BPG-independent phosphoglycerate mutase family. Monomer. Mn(2+) is required as a cofactor.

The protein resides in the cytoplasm. It catalyses the reaction (2R)-2-phosphoglycerate = (2R)-3-phosphoglycerate. Its pathway is carbohydrate degradation; glycolysis; pyruvate from D-glyceraldehyde 3-phosphate: step 3/5. Its function is as follows. Catalyzes the interconversion of 2-phosphoglycerate and 3-phosphoglycerate. This Prunus dulcis (Almond) protein is 2,3-bisphosphoglycerate-independent phosphoglycerate mutase.